Reading from the N-terminus, the 224-residue chain is Proteasome subunit beta (224 aa).

A propeptide spans 1–6 (removed in mature form; by autocatalysis); it reads MDVMKG. T7 serves as the catalytic Nucleophile.

It belongs to the peptidase T1B family. The 20S proteasome core is composed of 14 alpha and 14 beta subunits that assemble into four stacked heptameric rings, resulting in a barrel-shaped structure. The two inner rings, each composed of seven catalytic beta subunits, are sandwiched by two outer rings, each composed of seven alpha subunits. The catalytic chamber with the active sites is on the inside of the barrel. Has a gated structure, the ends of the cylinder being occluded by the N-termini of the alpha-subunits. Is capped at one or both ends by the proteasome regulatory ATPase, PAN.

It is found in the cytoplasm. It catalyses the reaction Cleavage of peptide bonds with very broad specificity.. The formation of the proteasomal ATPase PAN-20S proteasome complex, via the docking of the C-termini of PAN into the intersubunit pockets in the alpha-rings, triggers opening of the gate for substrate entry. Interconversion between the open-gate and close-gate conformations leads to a dynamic regulation of the 20S proteasome proteolysis activity. Functionally, component of the proteasome core, a large protease complex with broad specificity involved in protein degradation. The M.jannaschii proteasome is able to cleave oligopeptides after Glu, Asp, Tyr, Phe, Trp, slightly after Arg, but not after Ala. Thus, displays caspase-like and chymotrypsin-like activities and low level of trypsin-like activity. The polypeptide is Proteasome subunit beta (Methanocaldococcus jannaschii (strain ATCC 43067 / DSM 2661 / JAL-1 / JCM 10045 / NBRC 100440) (Methanococcus jannaschii)).